Reading from the N-terminus, the 652-residue chain is Acetyl-coenzyme A synthetase (652 aa).

CoA-binding positions include 189–192 and threonine 311; that span reads RGDK. ATP is bound by residues 387–389, 411–416, aspartate 500, and arginine 515; these read GEP and DTWWQT. Serine 523 provides a ligand contact to CoA. Residue arginine 526 coordinates ATP. Mg(2+) contacts are provided by histidine 539 and valine 542. A CoA-binding site is contributed by arginine 584. Lysine 609 carries the N6-acetyllysine modification.

This sequence belongs to the ATP-dependent AMP-binding enzyme family. It depends on Mg(2+) as a cofactor. Acetylated. Deacetylation by the SIR2-homolog deacetylase activates the enzyme.

The enzyme catalyses acetate + ATP + CoA = acetyl-CoA + AMP + diphosphate. In terms of biological role, catalyzes the conversion of acetate into acetyl-CoA (AcCoA), an essential intermediate at the junction of anabolic and catabolic pathways. AcsA undergoes a two-step reaction. In the first half reaction, AcsA combines acetate with ATP to form acetyl-adenylate (AcAMP) intermediate. In the second half reaction, it can then transfer the acetyl group from AcAMP to the sulfhydryl group of CoA, forming the product AcCoA. The sequence is that of Acetyl-coenzyme A synthetase from Bartonella bacilliformis (strain ATCC 35685 / KC583 / Herrer 020/F12,63).